Here is a 781-residue protein sequence, read N- to C-terminus: Phenylalanine--tRNA ligase beta subunit (781 aa).

Positions 39–147 constitute a tRNA-binding domain; the sequence is APPFNDVVVA…DDAPVGEDLR (109 aa). The region spanning 398-473 is the B5 domain; sequence PRREPIELRL…RLFGYDRIPA (76 aa). Mg(2+) contacts are provided by D451, D457, E460, and E461. An FDX-ACB domain is found at 687-780; that stretch reads SRFPQVRRDL…AARRCSATLR (94 aa).

The protein belongs to the phenylalanyl-tRNA synthetase beta subunit family. Type 1 subfamily. Tetramer of two alpha and two beta subunits. Requires Mg(2+) as cofactor.

It localises to the cytoplasm. The catalysed reaction is tRNA(Phe) + L-phenylalanine + ATP = L-phenylalanyl-tRNA(Phe) + AMP + diphosphate + H(+). The protein is Phenylalanine--tRNA ligase beta subunit of Thiobacillus denitrificans (strain ATCC 25259 / T1).